The chain runs to 76 residues: Small ribosomal subunit protein uS17 (76 aa).

It belongs to the universal ribosomal protein uS17 family. As to quaternary structure, part of the 30S ribosomal subunit.

One of the primary rRNA binding proteins, it binds specifically to the 5'-end of 16S ribosomal RNA. The chain is Small ribosomal subunit protein uS17 from Dinoroseobacter shibae (strain DSM 16493 / NCIMB 14021 / DFL 12).